The primary structure comprises 190 residues: Potassium-transporting ATPase KdpC subunit (190 aa).

The helical transmembrane segment at 10–30 (TFLFLLLITGGVYPLLTTALG) threads the bilayer.

Belongs to the KdpC family. In terms of assembly, the system is composed of three essential subunits: KdpA, KdpB and KdpC.

The protein resides in the cell inner membrane. Functionally, part of the high-affinity ATP-driven potassium transport (or Kdp) system, which catalyzes the hydrolysis of ATP coupled with the electrogenic transport of potassium into the cytoplasm. This subunit acts as a catalytic chaperone that increases the ATP-binding affinity of the ATP-hydrolyzing subunit KdpB by the formation of a transient KdpB/KdpC/ATP ternary complex. The polypeptide is Potassium-transporting ATPase KdpC subunit (Escherichia fergusonii (strain ATCC 35469 / DSM 13698 / CCUG 18766 / IAM 14443 / JCM 21226 / LMG 7866 / NBRC 102419 / NCTC 12128 / CDC 0568-73)).